Consider the following 436-residue polypeptide: GTPase Der (436 aa).

2 EngA-type G domains span residues 4 to 167 (PVVA…PKEE) and 176 to 351 (VKFS…DNHS). GTP is bound by residues 10–17 (GRPNVGKS), 57–61 (DTGGI), 119–122 (NKVD), 182–189 (GRPNVGKS), 229–233 (DTAGM), and 294–297 (NKWD). Residues 352-436 (LRVQSSMLND…PIRVIARKRK (85 aa)) enclose the KH-like domain.

The protein belongs to the TRAFAC class TrmE-Era-EngA-EngB-Septin-like GTPase superfamily. EngA (Der) GTPase family. Associates with the 50S ribosomal subunit.

In terms of biological role, GTPase that plays an essential role in the late steps of ribosome biogenesis. The chain is GTPase Der from Listeria innocua serovar 6a (strain ATCC BAA-680 / CLIP 11262).